A 290-amino-acid polypeptide reads, in one-letter code: ATP synthase gamma chain (290 aa).

It belongs to the ATPase gamma chain family. F-type ATPases have 2 components, CF(1) - the catalytic core - and CF(0) - the membrane proton channel. CF(1) has five subunits: alpha(3), beta(3), gamma(1), delta(1), epsilon(1). CF(0) has three main subunits: a, b and c.

It is found in the cell inner membrane. Its function is as follows. Produces ATP from ADP in the presence of a proton gradient across the membrane. The gamma chain is believed to be important in regulating ATPase activity and the flow of protons through the CF(0) complex. The chain is ATP synthase gamma chain from Anaeromyxobacter sp. (strain Fw109-5).